The chain runs to 148 residues: Small ribosomal subunit protein bS6 (148 aa).

The segment at His96–Ala148 is disordered.

The protein belongs to the bacterial ribosomal protein bS6 family.

Functionally, binds together with bS18 to 16S ribosomal RNA. In Brucella melitensis biotype 1 (strain ATCC 23456 / CCUG 17765 / NCTC 10094 / 16M), this protein is Small ribosomal subunit protein bS6.